Consider the following 90-residue polypeptide: Large ribosomal subunit protein bL27 (90 aa).

The protein belongs to the bacterial ribosomal protein bL27 family.

This Rhodopseudomonas palustris (strain BisB5) protein is Large ribosomal subunit protein bL27.